Consider the following 305-residue polypeptide: Aspartate carbamoyltransferase catalytic subunit (305 aa).

Positions 56 and 57 each coordinate carbamoyl phosphate. Lys84 is a binding site for L-aspartate. Arg106, His136, and Gln139 together coordinate carbamoyl phosphate. L-aspartate contacts are provided by Arg169 and Arg221. Residues Ala262 and Pro263 each contribute to the carbamoyl phosphate site.

Belongs to the aspartate/ornithine carbamoyltransferase superfamily. ATCase family. Heterododecamer (2C3:3R2) of six catalytic PyrB chains organized as two trimers (C3), and six regulatory PyrI chains organized as three dimers (R2).

The catalysed reaction is carbamoyl phosphate + L-aspartate = N-carbamoyl-L-aspartate + phosphate + H(+). Its pathway is pyrimidine metabolism; UMP biosynthesis via de novo pathway; (S)-dihydroorotate from bicarbonate: step 2/3. Its function is as follows. Catalyzes the condensation of carbamoyl phosphate and aspartate to form carbamoyl aspartate and inorganic phosphate, the committed step in the de novo pyrimidine nucleotide biosynthesis pathway. This chain is Aspartate carbamoyltransferase catalytic subunit, found in Streptococcus sanguinis (strain SK36).